The following is a 193-amino-acid chain: Holliday junction branch migration complex subunit RuvA (193 aa).

The domain I stretch occupies residues Met-1–Gly-64. The domain II stretch occupies residues Ser-65–Ala-143. Residues Pro-144–Asp-151 are flexible linker. Residues Asp-151–Ala-193 are domain III.

Belongs to the RuvA family. In terms of assembly, homotetramer. Forms an RuvA(8)-RuvB(12)-Holliday junction (HJ) complex. HJ DNA is sandwiched between 2 RuvA tetramers; dsDNA enters through RuvA and exits via RuvB. An RuvB hexamer assembles on each DNA strand where it exits the tetramer. Each RuvB hexamer is contacted by two RuvA subunits (via domain III) on 2 adjacent RuvB subunits; this complex drives branch migration. In the full resolvosome a probable DNA-RuvA(4)-RuvB(12)-RuvC(2) complex forms which resolves the HJ.

Its subcellular location is the cytoplasm. Functionally, the RuvA-RuvB-RuvC complex processes Holliday junction (HJ) DNA during genetic recombination and DNA repair, while the RuvA-RuvB complex plays an important role in the rescue of blocked DNA replication forks via replication fork reversal (RFR). RuvA specifically binds to HJ cruciform DNA, conferring on it an open structure. The RuvB hexamer acts as an ATP-dependent pump, pulling dsDNA into and through the RuvAB complex. HJ branch migration allows RuvC to scan DNA until it finds its consensus sequence, where it cleaves and resolves the cruciform DNA. The protein is Holliday junction branch migration complex subunit RuvA of Cupriavidus pinatubonensis (strain JMP 134 / LMG 1197) (Cupriavidus necator (strain JMP 134)).